Reading from the N-terminus, the 935-residue chain is Protein translocase subunit SecA (935 aa).

Residues Gln-86, 104–108, and Asp-494 contribute to the ATP site; that span reads GEGKT. The segment at 879 to 935 is disordered; sequence EQAATARAQQHSSAAVAAPEQGATQRGAFGQRVSAADDAAPANRAERRAQKKPTKRH.

This sequence belongs to the SecA family. As to quaternary structure, monomer and homodimer. Part of the essential Sec protein translocation apparatus which comprises SecA, SecYEG and auxiliary proteins SecDF. Other proteins may also be involved.

Its subcellular location is the cell membrane. It is found in the cytoplasm. It carries out the reaction ATP + H2O + cellular proteinSide 1 = ADP + phosphate + cellular proteinSide 2.. In terms of biological role, part of the Sec protein translocase complex. Interacts with the SecYEG preprotein conducting channel. Has a central role in coupling the hydrolysis of ATP to the transfer of proteins into and across the cell membrane, serving as an ATP-driven molecular motor driving the stepwise translocation of polypeptide chains across the membrane. The sequence is that of Protein translocase subunit SecA from Leifsonia xyli subsp. xyli (strain CTCB07).